Here is a 287-residue protein sequence, read N- to C-terminus: Undecaprenyl-diphosphatase (287 aa).

The next 6 membrane-spanning stretches (helical) occupy residues 50 to 70 (PGVSVTAAIQLGSIVAVIAYF), 99 to 119 (IAMAVGTLPILAVGLAIKLFW), 128 to 148 (LRSVPSIAVVSIVMALLLAVA), 206 to 226 (FLLGIPAITIAGIVELKDALA), 231 to 251 (AGPLPLVIGILAATVVSWLAI), and 263 to 283 (TWLFVAYRLLFGVGLLAWWSI).

This sequence belongs to the UppP family.

It is found in the cell inner membrane. The enzyme catalyses di-trans,octa-cis-undecaprenyl diphosphate + H2O = di-trans,octa-cis-undecaprenyl phosphate + phosphate + H(+). Catalyzes the dephosphorylation of undecaprenyl diphosphate (UPP). Confers resistance to bacitracin. This Parasynechococcus marenigrum (strain WH8102) protein is Undecaprenyl-diphosphatase.